A 622-amino-acid polypeptide reads, in one-letter code: Elongation factor 4 (622 aa).

In terms of domain architecture, tr-type G spans 17 to 201; the sequence is ALIRNFCIIA…KVVAEVPAPV (185 aa). Residues 29–34 and 148–151 contribute to the GTP site; these read DHGKST and NKID.

This sequence belongs to the TRAFAC class translation factor GTPase superfamily. Classic translation factor GTPase family. LepA subfamily.

The protein resides in the cell membrane. The enzyme catalyses GTP + H2O = GDP + phosphate + H(+). Its function is as follows. Required for accurate and efficient protein synthesis under certain stress conditions. May act as a fidelity factor of the translation reaction, by catalyzing a one-codon backward translocation of tRNAs on improperly translocated ribosomes. Back-translocation proceeds from a post-translocation (POST) complex to a pre-translocation (PRE) complex, thus giving elongation factor G a second chance to translocate the tRNAs correctly. Binds to ribosomes in a GTP-dependent manner. This is Elongation factor 4 from Streptomyces coelicolor (strain ATCC BAA-471 / A3(2) / M145).